The following is a 247-amino-acid chain: uncharacterized protein (247 aa).

NADP(+) is bound by residues Leu11, Asn85, and Lys119. Ser136 functions as the Proton donor in the catalytic mechanism. Tyr150, Lys154, Val181, and Thr183 together coordinate NADP(+). Tyr150 serves as the catalytic Proton acceptor. Lys154 (lowers pKa of active site Tyr) is an active-site residue.

Belongs to the short-chain dehydrogenases/reductases (SDR) family.

This is an uncharacterized protein from Schizosaccharomyces pombe (strain 972 / ATCC 24843) (Fission yeast).